Reading from the N-terminus, the 61-residue chain is uncharacterized protein (61 aa).

This is an uncharacterized protein from Saccharomyces cerevisiae (strain ATCC 204508 / S288c) (Baker's yeast).